We begin with the raw amino-acid sequence, 156 residues long: Small ribosomal subunit protein uS7 (156 aa).

It belongs to the universal ribosomal protein uS7 family. As to quaternary structure, part of the 30S ribosomal subunit. Contacts proteins S9 and S11.

One of the primary rRNA binding proteins, it binds directly to 16S rRNA where it nucleates assembly of the head domain of the 30S subunit. Is located at the subunit interface close to the decoding center, probably blocks exit of the E-site tRNA. This is Small ribosomal subunit protein uS7 from Mycobacterium bovis (strain ATCC BAA-935 / AF2122/97).